Reading from the N-terminus, the 81-residue chain is ATP synthase subunit c (81 aa).

2 helical membrane passes run 14-34 (YLGA…IGTV) and 60-80 (LAFA…LLFV).

Belongs to the ATPase C chain family. In terms of assembly, F-type ATPases have 2 components, F(1) - the catalytic core - and F(0) - the membrane proton channel. F(1) has five subunits: alpha(3), beta(3), gamma(1), delta(1), epsilon(1). F(0) has three main subunits: a(1), b(2) and c(10-14). The alpha and beta chains form an alternating ring which encloses part of the gamma chain. F(1) is attached to F(0) by a central stalk formed by the gamma and epsilon chains, while a peripheral stalk is formed by the delta and b chains.

Its subcellular location is the cell membrane. F(1)F(0) ATP synthase produces ATP from ADP in the presence of a proton or sodium gradient. F-type ATPases consist of two structural domains, F(1) containing the extramembraneous catalytic core and F(0) containing the membrane proton channel, linked together by a central stalk and a peripheral stalk. During catalysis, ATP synthesis in the catalytic domain of F(1) is coupled via a rotary mechanism of the central stalk subunits to proton translocation. In terms of biological role, key component of the F(0) channel; it plays a direct role in translocation across the membrane. A homomeric c-ring of between 10-14 subunits forms the central stalk rotor element with the F(1) delta and epsilon subunits. This chain is ATP synthase subunit c, found in Clostridium acetobutylicum (strain ATCC 824 / DSM 792 / JCM 1419 / IAM 19013 / LMG 5710 / NBRC 13948 / NRRL B-527 / VKM B-1787 / 2291 / W).